Consider the following 427-residue polypeptide: Endothelin-1 receptor (427 aa).

The first 20 residues, 1–20 (METLCLRASFWLALVGCVIS), serve as a signal peptide directing secretion. Over 21–80 (DNPERYSTNLSNHVDDFTTFRGTELSFLVTTHQPTNLVLPSNGSMHNYCPQQTKITSAFK) the chain is Extracellular. N-linked (GlcNAc...) asparagine glycosylation is found at Asn29 and Asn62. The chain crosses the membrane as a helical span at residues 81–102 (YINTVISCTIFIVGMVGNATLL). At 103–112 (RIIYQNKCMR) the chain is on the cytoplasmic side. A helical transmembrane segment spans residues 113 to 132 (NGPNALIASLALGDLIYVVI). At 133 to 159 (DLPINVFKLLAGRWPFDHNDFGVFLCK) the chain is on the extracellular side. Cys158 and Cys239 are joined by a disulfide. Residues 160 to 181 (LFPFLQKSSVGITVLNLCALSV) form a helical membrane-spanning segment. At 182-205 (DRYRAVASWSRVQGIGIPLVTAIE) the chain is on the cytoplasmic side. A helical membrane pass occupies residues 206-229 (IVSIWILSFILAIPEAIGFVMVPF). Residues 230 to 256 (EYRGEQHKTCMLNATSKFMEFYQDVKD) lie on the Extracellular side of the membrane. The helical transmembrane segment at 257 to 278 (WWLFGFYFCMPLVCTAIFYTLM) threads the bilayer. Topologically, residues 279-306 (TCEMLNRRNGSLRIALSEHLKQRREVAK) are cytoplasmic. The helical transmembrane segment at 307–328 (TVFCLVVIFALCWFPLHLSRIL) threads the bilayer. The Extracellular segment spans residues 329-347 (KKTVYNEMDKNRCELLSFL). The helical transmembrane segment at 348-372 (LLMDYIGINLATMNSCINPIALYFV) threads the bilayer. Residues 373 to 427 (SKKFKNCFQSCLCCCCYQSKSLMTSVPMNGTSIQWKNHDQNNHNTDRSSHKDSMN) lie on the Cytoplasmic side of the membrane. The interval 406-427 (QWKNHDQNNHNTDRSSHKDSMN) is disordered. Basic and acidic residues predominate over residues 408–427 (KNHDQNNHNTDRSSHKDSMN). Ser425 carries the post-translational modification Phosphoserine.

The protein belongs to the G-protein coupled receptor 1 family. Endothelin receptor subfamily. EDNRA sub-subfamily. As to quaternary structure, interacts with HDAC7 and KAT5. Isoform 1, isoform 3 and isoform 4 are expressed in a variety of tissues, with highest levels in the aorta and cerebellum, followed by lung, atrium and cerebral cortex, lower levels in the placenta, kidney, adrenal gland, duodenum, colon, ventricle and liver but no expression in umbilical vein endothelial cells. Within the placenta, isoform 1, isoform 2, isoform 3 and isoform 4 are expressed in the villi and stem villi vessels.

The protein resides in the cell membrane. Functionally, receptor for endothelin-1. Mediates its action by association with G proteins that activate a phosphatidylinositol-calcium second messenger system. The rank order of binding affinities for ET-A is: ET1 &gt; ET2 &gt;&gt; ET3. The polypeptide is Endothelin-1 receptor (Homo sapiens (Human)).